The primary structure comprises 33 residues: uncharacterized protein (33 aa).

Its subcellular location is the cytoplasm. The protein localises to the nucleus. This is an uncharacterized protein from Schizosaccharomyces pombe (strain 972 / ATCC 24843) (Fission yeast).